Reading from the N-terminus, the 87-residue chain is Toxin Css39.8 (87 aa).

Positions 1 to 19 are cleaved as a signal peptide; it reads MNSLLMITACFFLIGTVWA. Residues 20-85 form the LCN-type CS-alpha/beta domain; the sequence is KEGYLVNKST…TYPLPNKSCS (66 aa). Disulfide bonds link cysteine 31-cysteine 84, cysteine 35-cysteine 60, cysteine 44-cysteine 65, and cysteine 48-cysteine 67.

This sequence belongs to the long (4 C-C) scorpion toxin superfamily. Sodium channel inhibitor family. Beta subfamily. Expressed by the venom gland.

It is found in the secreted. Its function is as follows. Beta toxins bind voltage-independently at site-4 of sodium channels (Nav) and shift the voltage of activation toward more negative potentials thereby affecting sodium channel activation and promoting spontaneous and repetitive firing. This toxin is lethal to crustaceans (freshwater crayfish (Cambarellus montezumae spp.)), it provokes a reversible paralysis to insects (crickets (Achaeta spp.)), but is not toxic to mice. At high concentrations, it does displace the (beta) mammal-specific toxin Cn2 from rat brain synaptosomes. This chain is Toxin Css39.8, found in Centruroides suffusus (Durango bark scorpion).